Reading from the N-terminus, the 74-residue chain is UPF0154 protein LVIS_1358 (74 aa).

A helical transmembrane segment spans residues 4–24 (WIWILIVIVVGLACAAGGFYG).

It belongs to the UPF0154 family.

The protein localises to the cell membrane. The protein is UPF0154 protein LVIS_1358 of Levilactobacillus brevis (strain ATCC 367 / BCRC 12310 / CIP 105137 / JCM 1170 / LMG 11437 / NCIMB 947 / NCTC 947) (Lactobacillus brevis).